The following is a 473-amino-acid chain: Photosystem II CP43 reaction center protein (473 aa).

Residues 1-14 (MKTLYSLRRFYPVE) constitute a propeptide that is removed on maturation. At T15 the chain carries N-acetylthreonine. A Phosphothreonine modification is found at T15. 5 helical membrane passes run 69–93 (LFEV…PHLA), 134–155 (LLGP…KDRN), 178–200 (KALY…RKIT), 255–275 (KPFA…LSYS), and 291–312 (WFNN…ASQA). E367 is a binding site for [CaMn4O5] cluster. Residues 447 to 471 (RARAAAAGFEKGIDRDLEPVLSMTP) form a helical membrane-spanning segment.

This sequence belongs to the PsbB/PsbC family. PsbC subfamily. As to quaternary structure, PSII is composed of 1 copy each of membrane proteins PsbA, PsbB, PsbC, PsbD, PsbE, PsbF, PsbH, PsbI, PsbJ, PsbK, PsbL, PsbM, PsbT, PsbX, PsbY, PsbZ, Psb30/Ycf12, at least 3 peripheral proteins of the oxygen-evolving complex and a large number of cofactors. It forms dimeric complexes. Requires Binds multiple chlorophylls and provides some of the ligands for the Ca-4Mn-5O cluster of the oxygen-evolving complex. It may also provide a ligand for a Cl- that is required for oxygen evolution. PSII binds additional chlorophylls, carotenoids and specific lipids. as cofactor.

Its subcellular location is the plastid. The protein localises to the chloroplast thylakoid membrane. One of the components of the core complex of photosystem II (PSII). It binds chlorophyll and helps catalyze the primary light-induced photochemical processes of PSII. PSII is a light-driven water:plastoquinone oxidoreductase, using light energy to abstract electrons from H(2)O, generating O(2) and a proton gradient subsequently used for ATP formation. This chain is Photosystem II CP43 reaction center protein, found in Dioscorea elephantipes (Elephant's foot yam).